A 351-amino-acid polypeptide reads, in one-letter code: Photosystem II D2 protein (351 aa).

Residues 39–59 (TAYLAIGGWLTGTTFVTSWYT) form a helical membrane-spanning segment. A chlorophyll a-binding site is contributed by histidine 116. Residues 123–139 (GFMLRQFEIARLVGIRP) traverse the membrane as a helical segment. 2 residues coordinate pheophytin a: glutamine 128 and asparagine 141. The helical transmembrane segment at 151 to 164 (VFVSVFLMYPLGQS) threads the bilayer. Histidine 196 is a chlorophyll a binding site. The chain crosses the membrane as a helical span at residues 206–226 (GALLCAIHGATVENTLFEDGE). The a plastoquinone site is built by histidine 213 and phenylalanine 260. Histidine 213 contacts Fe cation. Fe cation is bound at residue histidine 267. A helical transmembrane segment spans residues 277–293 (GLWTSSIGIIGLALNLR).

Belongs to the reaction center PufL/M/PsbA/D family. As to quaternary structure, PSII is composed of 1 copy each of membrane proteins PsbA, PsbB, PsbC, PsbD, PsbE, PsbF, PsbH, PsbI, PsbJ, PsbK, PsbL, PsbM, PsbT, PsbX, PsbY, PsbZ, Psb30/Ycf12, peripheral proteins PsbO, CyanoQ (PsbQ), PsbU, PsbV and a large number of cofactors. It forms dimeric complexes. The D1/D2 heterodimer binds P680, chlorophylls that are the primary electron donor of PSII, and subsequent electron acceptors. It shares a non-heme iron and each subunit binds pheophytin, quinone, additional chlorophylls, carotenoids and lipids. There is also a Cl(-1) ion associated with D1 and D2, which is required for oxygen evolution. The PSII complex binds additional chlorophylls, carotenoids and specific lipids. is required as a cofactor.

The protein localises to the cellular thylakoid membrane. The enzyme catalyses 2 a plastoquinone + 4 hnu + 2 H2O = 2 a plastoquinol + O2. In terms of biological role, photosystem II (PSII) is a light-driven water:plastoquinone oxidoreductase that uses light energy to abstract electrons from H(2)O, generating O(2) and a proton gradient subsequently used for ATP formation. It consists of a core antenna complex that captures photons, and an electron transfer chain that converts photonic excitation into a charge separation. The D1/D2 (PsbA/PsbD) reaction center heterodimer binds P680, the primary electron donor of PSII as well as several subsequent electron acceptors. D2 is needed for assembly of a stable PSII complex. This Parasynechococcus marenigrum (strain WH8102) protein is Photosystem II D2 protein.